We begin with the raw amino-acid sequence, 717 residues long: F-box only protein 42 (717 aa).

Acidic residues predominate over residues 1-30; sequence MASSSDSEDDSVMAVDQEETALEGTMEQDE. The disordered stretch occupies residues 1–34; sequence MASSSDSEDDSVMAVDQEETALEGTMEQDEDPHP. The F-box domain maps to 44 to 93; that stretch reads NRSMSELPEEVLEYILSFLSPYQEHKTAALVCKQWYRLIKGVAHQCYHGF. 4 Kelch repeats span residues 132 to 184, 186 to 242, 244 to 293, and 295 to 342; these read SMYV…VYKD, LVLF…VIGD, MIVF…VIDD, and TLLI…LWCH. Residues 361-452 form a disordered region; sequence RAPLSPSLNS…NLSPGTVAVG (92 aa). Residues 363–376 show a composition bias toward low complexity; it reads PLSPSLNSRPSPIS. 2 positions are modified to phosphoserine: Ser365 and Ser373. At Thr378 the chain carries Phosphothreonine. The segment covering 416–426 has biased composition (polar residues); it reads QRQTPSGSREG. Ser552 is subject to Phosphoserine. Residues 570–595 are compositionally biased toward low complexity; it reads GPSASAALSPPLGSSPSSPGSQSLSS. Residues 570–632 are disordered; that stretch reads GPSASAALSP…HHPPQSLNVG (63 aa).

As to quaternary structure, component of some SCF complex, composed of CUL1, SKP1, RBX1 and FBXO42. Interacts (via the kelch domain) with p53/TP53; interaction is direct.

Functionally, substrate-recognition component of some SCF (SKP1-CUL1-F-box protein)-type E3 ubiquitin ligase complex. Specifically recognizes p53/TP53, promoting its ubiquitination and degradation. The sequence is that of F-box only protein 42 (Fbxo42) from Mus musculus (Mouse).